A 172-amino-acid polypeptide reads, in one-letter code: Large ribosomal subunit protein uL10 (172 aa).

The protein belongs to the universal ribosomal protein uL10 family. Part of the ribosomal stalk of the 50S ribosomal subunit. The N-terminus interacts with L11 and the large rRNA to form the base of the stalk. The C-terminus forms an elongated spine to which L12 dimers bind in a sequential fashion forming a multimeric L10(L12)X complex.

Forms part of the ribosomal stalk, playing a central role in the interaction of the ribosome with GTP-bound translation factors. The sequence is that of Large ribosomal subunit protein uL10 from Leifsonia xyli subsp. xyli (strain CTCB07).